The chain runs to 189 residues: Peptidyl-tRNA hydrolase (189 aa).

Residue tyrosine 15 participates in tRNA binding. Histidine 20 (proton acceptor) is an active-site residue. Positions 66, 68, and 114 each coordinate tRNA.

The protein belongs to the PTH family. Monomer.

The protein localises to the cytoplasm. The enzyme catalyses an N-acyl-L-alpha-aminoacyl-tRNA + H2O = an N-acyl-L-amino acid + a tRNA + H(+). In terms of biological role, hydrolyzes ribosome-free peptidyl-tRNAs (with 1 or more amino acids incorporated), which drop off the ribosome during protein synthesis, or as a result of ribosome stalling. Catalyzes the release of premature peptidyl moieties from peptidyl-tRNA molecules trapped in stalled 50S ribosomal subunits, and thus maintains levels of free tRNAs and 50S ribosomes. This is Peptidyl-tRNA hydrolase from Dichelobacter nodosus (strain VCS1703A).